Here is a 173-residue protein sequence, read N- to C-terminus: Transcriptional regulator ERG homolog (173 aa).

A DNA-binding region (ETS) is located at residues 1 to 84 (SGQIQLWQFL…HGKRYAYKFD (84 aa)).

Belongs to the ETS family.

The protein localises to the nucleus. In terms of biological role, acts as a transcriptional activator. This is Transcriptional regulator ERG homolog (ERG) from Lytechinus variegatus (Green sea urchin).